Reading from the N-terminus, the 190-residue chain is Threonylcarbamoyl-AMP synthase (190 aa).

The YrdC-like domain maps to 7-190; it reads GDAIAAAIDV…ALTGELFRQG (184 aa).

The protein belongs to the SUA5 family. TsaC subfamily.

The protein resides in the cytoplasm. It catalyses the reaction L-threonine + hydrogencarbonate + ATP = L-threonylcarbamoyladenylate + diphosphate + H2O. Required for the formation of a threonylcarbamoyl group on adenosine at position 37 (t(6)A37) in tRNAs that read codons beginning with adenine. Catalyzes the conversion of L-threonine, HCO(3)(-)/CO(2) and ATP to give threonylcarbamoyl-AMP (TC-AMP) as the acyladenylate intermediate, with the release of diphosphate. The sequence is that of Threonylcarbamoyl-AMP synthase from Escherichia coli O1:K1 / APEC.